Reading from the N-terminus, the 534-residue chain is Probable RNA-binding protein 46 (534 aa).

RRM domains lie at 61-139 (CEVF…VSLD), 141-223 (CRLF…WASP), and 236-308 (KVLY…LAKP).

The protein localises to the cytoplasm. Essential for male and female fertility, playing a crucial role in regulating germ cell development by ensuring the proper progression of meiosis prophase I. The chain is Probable RNA-binding protein 46 (rbm46) from Xenopus tropicalis (Western clawed frog).